Consider the following 185-residue polypeptide: Large ribosomal subunit protein uL5 (185 aa).

The protein belongs to the universal ribosomal protein uL5 family. In terms of assembly, part of the 50S ribosomal subunit; part of the 5S rRNA/L5/L18/L25 subcomplex. Contacts the 5S rRNA and the P site tRNA. Forms a bridge to the 30S subunit in the 70S ribosome.

Functionally, this is one of the proteins that bind and probably mediate the attachment of the 5S RNA into the large ribosomal subunit, where it forms part of the central protuberance. In the 70S ribosome it contacts protein S13 of the 30S subunit (bridge B1b), connecting the 2 subunits; this bridge is implicated in subunit movement. Contacts the P site tRNA; the 5S rRNA and some of its associated proteins might help stabilize positioning of ribosome-bound tRNAs. The sequence is that of Large ribosomal subunit protein uL5 from Nitrobacter hamburgensis (strain DSM 10229 / NCIMB 13809 / X14).